The sequence spans 307 residues: Acyl transferase (307 aa).

Catalysis depends on charge relay system residues serine 116, aspartate 213, and histidine 243.

It belongs to the LuxD family.

It functions in the pathway lipid metabolism; fatty acid reduction for biolumincescence. Acyl transferase is part of the fatty acid reductase system required for aldehyde biosynthesis; it produces fatty acids for the luminescent reaction. In Aliivibrio fischeri (Vibrio fischeri), this protein is Acyl transferase.